The primary structure comprises 657 residues: MLELTSEFKPSPDQQEAIKGIVKSIKKGNKYQTLLGVTGSGKTFTMANVIKELNIPTLIMSHNKSLCAQLYSEFKGFFSKNHVEYFISYYDYYQPEAYIPRTDVFIEKDSSTNEDLERLRLSATASLLSYEDVVCIASVSANYGLGNPNEYIGMVLIFELGMQISQKELLKKLVDMGYKRNDNFFDRADFRVQGDIIDIYPAYYEDEVVRLEFFGDELDAMYHYNVLENKKGKDLKRFILYPTSQFSVGETRLKQAIKDIKAELNERLAYFEHENKLVEYQRLKQRVEFDLEMLTSTGMCKGVENYARHLTGLKEGDTPYTLFDYFAIKNRKFLVIVDESHVSLPQFRGMFAGDRSRKQTLVDYGFRLPSALDNRPLMFDEFIHKNCQFLFVSATPAPLELELSKENIFHQIMRPTGLLDPLIELKDSDNQVEILFDEAKKVIQRNERVLVTVLTKKLAEELTRYYLELGIKVKYMHSDIDAIERNEIIRGLRSGAFDMLIGINLLREGLDLPEVSLIAIMDADKEGFLRSTTSLIQTMGRAARNVNGKVLLFCKKITKSMQEAMDTTNERRKLQMAYNKKYNITPTSVKRHIEESLKNEEDLGEIYRKGKKLEKMPASERAKLAKELRKQMLEAAKALEFEKAAAIRDEINKLRDL.

The Helicase ATP-binding domain maps to 23-414; it reads KSIKKGNKYQ…KENIFHQIMR (392 aa). 36–43 contributes to the ATP binding site; sequence GVTGSGKT. The Beta-hairpin signature appears at 89 to 112; that stretch reads YYDYYQPEAYIPRTDVFIEKDSST. Residues 431 to 593 form the Helicase C-terminal domain; sequence QVEILFDEAK…ITPTSVKRHI (163 aa). The 36-residue stretch at 622–657 folds into the UVR domain; that stretch reads AKLAKELRKQMLEAAKALEFEKAAAIRDEINKLRDL.

It belongs to the UvrB family. Forms a heterotetramer with UvrA during the search for lesions. Interacts with UvrC in an incision complex.

The protein resides in the cytoplasm. Functionally, the UvrABC repair system catalyzes the recognition and processing of DNA lesions. A damage recognition complex composed of 2 UvrA and 2 UvrB subunits scans DNA for abnormalities. Upon binding of the UvrA(2)B(2) complex to a putative damaged site, the DNA wraps around one UvrB monomer. DNA wrap is dependent on ATP binding by UvrB and probably causes local melting of the DNA helix, facilitating insertion of UvrB beta-hairpin between the DNA strands. Then UvrB probes one DNA strand for the presence of a lesion. If a lesion is found the UvrA subunits dissociate and the UvrB-DNA preincision complex is formed. This complex is subsequently bound by UvrC and the second UvrB is released. If no lesion is found, the DNA wraps around the other UvrB subunit that will check the other stand for damage. In Campylobacter jejuni (strain RM1221), this protein is UvrABC system protein B.